A 325-amino-acid polypeptide reads, in one-letter code: Lipoyl synthase (325 aa).

Positions 1–31 are disordered; that stretch reads MASDSDLLDTKPAETRHPEKAHRPDQPTLRK. A compositionally biased stretch (basic and acidic residues) spans 8–31; the sequence is LDTKPAETRHPEKAHRPDQPTLRK. [4Fe-4S] cluster-binding residues include Cys61, Cys66, Cys72, Cys87, Cys91, Cys94, and Ser300. The Radical SAM core domain maps to 73–289; it reads WAKKHATFMI…AEIGRAKGFL (217 aa).

Belongs to the radical SAM superfamily. Lipoyl synthase family. [4Fe-4S] cluster is required as a cofactor.

The protein localises to the cytoplasm. The enzyme catalyses [[Fe-S] cluster scaffold protein carrying a second [4Fe-4S](2+) cluster] + N(6)-octanoyl-L-lysyl-[protein] + 2 oxidized [2Fe-2S]-[ferredoxin] + 2 S-adenosyl-L-methionine + 4 H(+) = [[Fe-S] cluster scaffold protein] + N(6)-[(R)-dihydrolipoyl]-L-lysyl-[protein] + 4 Fe(3+) + 2 hydrogen sulfide + 2 5'-deoxyadenosine + 2 L-methionine + 2 reduced [2Fe-2S]-[ferredoxin]. The protein operates within protein modification; protein lipoylation via endogenous pathway; protein N(6)-(lipoyl)lysine from octanoyl-[acyl-carrier-protein]: step 2/2. Catalyzes the radical-mediated insertion of two sulfur atoms into the C-6 and C-8 positions of the octanoyl moiety bound to the lipoyl domains of lipoate-dependent enzymes, thereby converting the octanoylated domains into lipoylated derivatives. The protein is Lipoyl synthase of Methylocella silvestris (strain DSM 15510 / CIP 108128 / LMG 27833 / NCIMB 13906 / BL2).